Here is a 923-residue protein sequence, read N- to C-terminus: Transportin-3 (923 aa).

At M1 the chain carries N-acetylmethionine. S74 carries the phosphoserine modification. Phosphothreonine occurs at positions 242 and 896.

Interacts with (GTP-bound) Ran. Interacts with (phosphorylated) SFRS1 and SFRS2; leading to their nuclear import. Interacts with NUP62. Interacts with RBM4. Interacts with CPSF6, promoting its nuclear import.

The protein localises to the nucleus envelope. It localises to the cytoplasm. In terms of biological role, importin, which transports target proteins into the nucleus. Specifically mediates the nuclear import of splicing factor serine/arginine (SR) proteins, such as RBM4, SFRS1 and SFRS2, by recognizing phosphorylated SR domains. Also mediates the nuclear import of serine/arginine (SR) protein CPSF6, independently of CPSF6 phosphorylation. The nuclear import process is regulated by the small GTPase Ran that partitions between cytoplasm and nucleus in the predominantly GDP- and GTP-bound form, respectively. Importin associates with target cargo proteins in the cytoplasm, and the competitive binding of GTP-bound Ran induces the release of cargos in the nucleus. This is Transportin-3 from Mus musculus (Mouse).